The sequence spans 90 residues: Putative regulatory protein Cbei_1140 (90 aa).

This sequence belongs to the RemA family.

The polypeptide is Putative regulatory protein Cbei_1140 (Clostridium beijerinckii (strain ATCC 51743 / NCIMB 8052) (Clostridium acetobutylicum)).